A 250-amino-acid polypeptide reads, in one-letter code: DNA repair protein RecO (250 aa).

This sequence belongs to the RecO family.

Involved in DNA repair and RecF pathway recombination. The sequence is that of DNA repair protein RecO from Staphylococcus haemolyticus (strain JCSC1435).